The chain runs to 281 residues: Penicillin-insensitive murein endopeptidase (281 aa).

A signal peptide spans 1-24 (MKQGLIGVLALALGATLLSSAVWA). 3 cysteine pairs are disulfide-bonded: Cys49/Cys270, Cys192/Cys240, and Cys221/Cys228. Residues His115, His118, Asp125, and His216 each contribute to the Zn(2+) site. Positions 230-271 (EQSEPPIGDGCGAELTSWFQPKQPSSEAPEKTTPPPLPPSCQ) are disordered. Residues 246-255 (SWFQPKQPSS) are compositionally biased toward polar residues.

Belongs to the peptidase M74 family. In terms of assembly, dimer. It depends on Zn(2+) as a cofactor.

It is found in the periplasm. Its function is as follows. Murein endopeptidase that cleaves the D-alanyl-meso-2,6-diamino-pimelyl amide bond that connects peptidoglycan strands. Likely plays a role in the removal of murein from the sacculus. This chain is Penicillin-insensitive murein endopeptidase (mepA), found in Pectobacterium atrosepticum (strain SCRI 1043 / ATCC BAA-672) (Erwinia carotovora subsp. atroseptica).